Consider the following 505-residue polypeptide: Outer capsid protein VP5 (505 aa).

The interval 1-42 is involved in membrane permeabilization; that stretch reads MGKFTSFLKRAGSATKKALTSDAAKRMYKMAGKTLQKVVESE.

Belongs to the orbivirus VP5 family.

It is found in the virion. Functionally, VP5 protein is one of the two proteins (with VP2) which constitute the virus particle outer capsid. Acts as a membrane permeabilization protein that mediates release of viral particles from endosomal compartments into the cytoplasm. Permeabilization activity is probably negatively regulated by VP2 and is triggered by endosomal degradation of VP2 and exposure to low pH. This chain is Outer capsid protein VP5 (Segment-6), found in African horse sickness virus 9 (AHSV-9).